The primary structure comprises 193 residues: Holliday junction branch migration complex subunit RuvA (193 aa).

Positions 1-64 are domain I; the sequence is MIGRIAGTLL…EDAHLLYGFL (64 aa). Residues 65–139 are domain II; that stretch reads TPPERSTFRE…GKLGADLGPL (75 aa). The flexible linker stretch occupies residues 139–143; the sequence is LAGAA. The domain III stretch occupies residues 144–193; it reads SPSDHATDILNALVALGYSEKEALAAIKNVPAGTGVSEGIKLSLKALSKA.

Belongs to the RuvA family. As to quaternary structure, homotetramer. Forms an RuvA(8)-RuvB(12)-Holliday junction (HJ) complex. HJ DNA is sandwiched between 2 RuvA tetramers; dsDNA enters through RuvA and exits via RuvB. An RuvB hexamer assembles on each DNA strand where it exits the tetramer. Each RuvB hexamer is contacted by two RuvA subunits (via domain III) on 2 adjacent RuvB subunits; this complex drives branch migration. In the full resolvosome a probable DNA-RuvA(4)-RuvB(12)-RuvC(2) complex forms which resolves the HJ.

Its subcellular location is the cytoplasm. The RuvA-RuvB-RuvC complex processes Holliday junction (HJ) DNA during genetic recombination and DNA repair, while the RuvA-RuvB complex plays an important role in the rescue of blocked DNA replication forks via replication fork reversal (RFR). RuvA specifically binds to HJ cruciform DNA, conferring on it an open structure. The RuvB hexamer acts as an ATP-dependent pump, pulling dsDNA into and through the RuvAB complex. HJ branch migration allows RuvC to scan DNA until it finds its consensus sequence, where it cleaves and resolves the cruciform DNA. This is Holliday junction branch migration complex subunit RuvA from Burkholderia mallei (strain NCTC 10229).